The primary structure comprises 337 residues: Monoacylglycerol lipase ABHD6 (337 aa).

Residues 1-19 (MDLDVVNMFVIAGGTLALP) lie on the Extracellular side of the membrane. Residues 20–42 (ILAFVASFLLWPSALIRIYYWYW) traverse the membrane as a helical; Signal-anchor for type II membrane protein segment. Residues 43–337 (RRTLGMQVRY…HSTDNSKKLD (295 aa)) are Cytoplasmic-facing. Positions 72–313 (PSILMLHGFS…CGHSVVMERP (242 aa)) constitute an AB hydrolase-1 domain. Residue Ser-148 is the Nucleophile of the active site. Active-site charge relay system residues include Asp-278 and His-306.

This sequence belongs to the AB hydrolase superfamily.

The protein localises to the late endosome membrane. It localises to the lysosome membrane. It is found in the mitochondrion membrane. The enzyme catalyses Hydrolyzes glycerol monoesters of long-chain fatty acids.. The catalysed reaction is 1-octanoylglycerol + H2O = octanoate + glycerol + H(+). It carries out the reaction 1-decanoylglycerol + H2O = decanoate + glycerol + H(+). It catalyses the reaction 1-dodecanoylglycerol + H2O = dodecanoate + glycerol + H(+). The enzyme catalyses 1-tetradecanoylglycerol + H2O = tetradecanoate + glycerol + H(+). The catalysed reaction is 2-hexadecanoylglycerol + H2O = glycerol + hexadecanoate + H(+). It carries out the reaction 2-(9Z-octadecenoyl)-glycerol + H2O = glycerol + (9Z)-octadecenoate + H(+). It catalyses the reaction 1-(9Z-octadecenoyl)-glycerol + H2O = glycerol + (9Z)-octadecenoate + H(+). The enzyme catalyses 2-(9Z,12Z-octadecadienoyl)-glycerol + H2O = (9Z,12Z)-octadecadienoate + glycerol + H(+). The catalysed reaction is 2-(5Z,8Z,11Z,14Z-eicosatetraenoyl)-glycerol + H2O = glycerol + (5Z,8Z,11Z,14Z)-eicosatetraenoate + H(+). It carries out the reaction 1-(5Z,8Z,11Z,14Z-eicosatetraenoyl)-glycerol + H2O = glycerol + (5Z,8Z,11Z,14Z)-eicosatetraenoate + H(+). It catalyses the reaction 1-(9Z,12Z-octadecadienoyl)-glycerol + H2O = (9Z,12Z)-octadecadienoate + glycerol + H(+). The enzyme catalyses 3-(9Z-octadecenoyl)-sn-glycero-1-phospho-(3'-(9Z-octadecenoyl)-1'-sn-glycerol) + H2O = 3-(9Z-octadecenoyl)-sn-glycero-1-phospho-(1'-sn-glycerol) + (9Z)-octadecenoate + H(+). The catalysed reaction is (S,S)-2-(9Z-octadecenoyl)-sn-glycero-1-phospho-(2'-(9Z-octadecenoyl)-1'-sn-glycerol) + H2O = (S,S)-2-(9Z-octadecenoyl)-sn-glycero-1-phospho-(1'-sn-glycerol) + (9Z)-octadecenoate + H(+). It carries out the reaction (R,R)-2-(9Z-octadecenoyl)-sn-glycero-3-phospho-(2'-(9Z-octadecenoyl)-3'-sn-glycerol) + H2O = (R,R)-2-(9Z-octadecenoyl)-sn-glycero-3-phospho-(3'-sn-glycerol) + (9Z)-octadecenoate + H(+). In terms of biological role, lipase that preferentially hydrolysis medium-chain saturated monoacylglycerols including 2-arachidonoylglycerol. Through 2-arachidonoylglycerol degradation may regulate endocannabinoid signaling pathways. Also has a lysophosphatidyl lipase activity with a preference for lysophosphatidylglycerol among other lysophospholipids. Also able to degrade bis(monoacylglycero)phosphate (BMP) and constitutes the major enzyme for BMP catabolism. BMP, also known as lysobisphosphatidic acid, is enriched in late endosomes and lysosomes and plays a key role in the formation of intraluminal vesicles and in lipid sorting. The sequence is that of Monoacylglycerol lipase ABHD6 from Bos taurus (Bovine).